Here is a 462-residue protein sequence, read N- to C-terminus: MDKDSQGLLDSSLMASGTASRSEDEESLAGQKRASSQALGTIPKRRSSSRFIKRKKFDDELVESSLAKSSTRVKGAGGVESGRCSGSEPSSSEKKKVSKAPSTPVPPSPAPTPGLTKRVKKSKQPLQVTKDLGRWKPADDLLLINAVLQTNDLTSVHLGVKFSCRFTLREVQERWYALLYDPVISKLACQAMRQLHPEAIAAIQSKALFSKAEEQLLSKVGSSSQPTLETFQDLLHTHPDAFYLARTAKALQAHWQLMKQYYLLEDQTVQPLPKGDQVLNFSDAEDLIDDSKLKDMRDEVLEHELTVADRRQKREIRQLEQELHKWQVLVDSITGMGSPDFDNQTLAVLRGRMVRYLMRSREITLGRATKDNQIDVDLSLEGPAWKISRKQGVIKLKNNGDFFIANEGRRPIYIDGRPVLCGSKWRLSNNSVVEIASLRFVFLINQDLIALIRAEAAKITPQ.

At methionine 1 the chain carries N-acetylmethionine. The tract at residues 1–130 (MDKDSQGLLD…KSKQPLQVTK (130 aa)) is disordered. Serine 22 carries the phosphoserine modification. The span at 43-55 (PKRRSSSRFIKRK) shows a compositional bias: basic residues. A compositionally biased stretch (low complexity) spans 81-90 (SGRCSGSEPS). Serine 102 is subject to Phosphoserine. Threonine 103 carries the phosphothreonine modification. Positions 103–112 (TPVPPSPAPT) are enriched in pro residues. Serine 108 is subject to Phosphoserine. Positions 113-123 (PGLTKRVKKSK) match the Nuclear localization signal motif. 2 positions are modified to N6-acetyllysine: lysine 123 and lysine 130. Serine 282 carries the phosphoserine modification. The stretch at 301-335 (LEHELTVADRRQKREIRQLEQELHKWQVLVDSITG) forms a coiled coil. One can recognise an FHA domain in the interval 363–419 (ITLGRATKDNQIDVDLSLEGPAWKISRKQGVIKLKNNGDFFIANEGRRPIYIDGRPV). The UBR5-degron motif lies at 389-396 (RKQGVIKL).

As to quaternary structure, component of the chromatin remodeling INO80 complex; specifically part of a complex module associated with the N-terminus of INO80. Component of some MLL1/MLL complex, at least composed of the core components KMT2A/MLL1, ASH2L, HCFC1, WDR5 and RBBP5, as well as the facultative components BACC1, CHD8, E2F6, HSP70, INO80C, KANSL1, LAS1L, MAX, MCRS1, MGA, KAT8/MOF, PELP1, PHF20, PRP31, RING2, RUVB1/TIP49A, RUVB2/TIP49B, SENP3, TAF1, TAF4, TAF6, TAF7, TAF9 and TEX10. Component of the NSL complex at least composed of MOF/KAT8, KANSL1, KANSL2, KANSL3, MCRS1, PHF20, OGT1/OGT, WDR5 and HCFC1. Interacts with NOP2. Interacts with PINX1. Interacts with TERT. Interacts with CCDC85B. Interacts with DAXX. Interacts (via N-terminus) with FMR1 (via phosphorylated form). Interacts with FXR1 and FXR2. Interacts (via C-terminus) with NDE1 (via C-terminus); phosphorylation of NDE1 inhibits the interaction. Interacts (via C-terminus) with ZNF375. Interacts (via C-terminus) with active GTP-bound RHEB (via N-terminus) under conditions of high amino acid concentration; the interaction promotes mTORC1 complex activation by RHEB. Interacts (via N-terminus) with the mTORC1 complex; the interaction ensures mTORC1 activation by RHEB. Interacts with DYNC1I1; the interaction is required for the proper distribution of centriolar satellites. Interacts with TTBK2; the interaction is required for recruitment of TTBK2 to the mother centriole. Interacts with KIF2A; the interaction occurs during mitosis and facilitates chromosome alignment. Ubiquitinated by UBR5 when not assembled in the INO80 complex, leading to its degradation: UBR5 recognizes and binds a degron that is not accessible when MCRS1 is part of the INO80 complex. In terms of processing, phosphorylated by AURKA on Ser-35 and/or Ser-36 during mitosis which is required for kinetochore fiber assembly and mitotic progression but not for spindle localization or for chromosome-induced microtuble aster formation. Also phosphorylated by AURKA on Ser-85 and/or Ser-87. Phosphorylated by TTK/MPS1 which enhances recruitment of KIF2A to the minus end of spindle microtubules and facilitates precise chromosome segregation.

Its subcellular location is the nucleus. The protein localises to the nucleolus. It localises to the cytoplasm. It is found in the cytoskeleton. The protein resides in the microtubule organizing center. Its subcellular location is the centrosome. The protein localises to the spindle pole. It localises to the chromosome. It is found in the centromere. The protein resides in the kinetochore. Its subcellular location is the lysosome. The protein localises to the centriolar satellite. Modulates the transcription repressor activity of DAXX by recruiting it to the nucleolus. As part of the NSL complex it may be involved in acetylation of nucleosomal histone H4 on several lysine residues. Putative regulatory component of the chromatin remodeling INO80 complex which is involved in transcriptional regulation, DNA replication and probably DNA repair. May also be an inhibitor of TERT telomerase activity. Binds to G-quadruplex structures in mRNA. Binds to RNA homomer poly(G) and poly(U). Maintains RHEB at the lysosome in its active GTP-bound form and prevents its interaction with the mTORC1 complex inhibitor TSC2, ensuring activation of the mTORC1 complex by RHEB. Stabilizes the minus ends of kinetochore fibers by protecting them from depolymerization, ensuring functional spindle assembly during mitosis. Following phosphorylation by TTK/MPS1, enhances recruitment of KIF2A to the minus ends of mitotic spindle microtubules which promotes chromosome alignment. Regulates the morphology of microtubule minus ends in mitotic spindle by maintaining them in a closed conformation characterized by the presence of an electron-dense cap. Regulates G2/M transition and spindle assembly during oocyte meiosis. Mediates histone modifications and transcriptional regulation in germinal vesicle oocytes which are required for meiotic progression. Also regulates microtubule nucleation and spindle assembly by activating aurora kinases during oocyte meiosis. Contributes to the establishment of centriolar satellites and also plays a role in primary cilium formation by recruiting TTBK2 to the mother centriole which is necessary for removal of the CP110 cap from the mother centriole, an early step in ciliogenesis. Required for epiblast development during early embryogenesis. Essential for cell viability. In Mus musculus (Mouse), this protein is Microspherule protein 1 (Mcrs1).